Consider the following 375-residue polypeptide: Lipid-A-disaccharide synthase (375 aa).

This sequence belongs to the LpxB family.

The enzyme catalyses a lipid X + a UDP-2-N,3-O-bis[(3R)-3-hydroxyacyl]-alpha-D-glucosamine = a lipid A disaccharide + UDP + H(+). It functions in the pathway bacterial outer membrane biogenesis; LPS lipid A biosynthesis. In terms of biological role, condensation of UDP-2,3-diacylglucosamine and 2,3-diacylglucosamine-1-phosphate to form lipid A disaccharide, a precursor of lipid A, a phosphorylated glycolipid that anchors the lipopolysaccharide to the outer membrane of the cell. The chain is Lipid-A-disaccharide synthase from Pseudomonas putida (strain GB-1).